Here is a 179-residue protein sequence, read N- to C-terminus: CDP-archaeol synthase (179 aa).

The next 4 membrane-spanning stretches (helical) occupy residues 53 to 73 (FVGG…IEKL), 88 to 108 (FTLT…GSFI), 120 to 140 (FLIV…SLYP), and 145 to 165 (LFTA…HMGI).

It belongs to the CDP-archaeol synthase family. Requires Mg(2+) as cofactor.

The protein resides in the cell membrane. It carries out the reaction 2,3-bis-O-(geranylgeranyl)-sn-glycerol 1-phosphate + CTP + H(+) = CDP-2,3-bis-O-(geranylgeranyl)-sn-glycerol + diphosphate. It functions in the pathway membrane lipid metabolism; glycerophospholipid metabolism. Functionally, catalyzes the formation of CDP-2,3-bis-(O-geranylgeranyl)-sn-glycerol (CDP-archaeol) from 2,3-bis-(O-geranylgeranyl)-sn-glycerol 1-phosphate (DGGGP) and CTP. This reaction is the third ether-bond-formation step in the biosynthesis of archaeal membrane lipids. Can use CTP or dCTP, but not ATP, GTP or TTP. The protein is CDP-archaeol synthase of Archaeoglobus fulgidus (strain ATCC 49558 / DSM 4304 / JCM 9628 / NBRC 100126 / VC-16).